Consider the following 573-residue polypeptide: DNA ligase (573 aa).

An ATP-binding site is contributed by E250. Catalysis depends on K252, which acts as the N6-AMP-lysine intermediate. 6 residues coordinate ATP: R257, R272, E301, F342, R432, and K438.

The protein belongs to the ATP-dependent DNA ligase family. Mg(2+) serves as cofactor.

The catalysed reaction is ATP + (deoxyribonucleotide)n-3'-hydroxyl + 5'-phospho-(deoxyribonucleotide)m = (deoxyribonucleotide)n+m + AMP + diphosphate.. In terms of biological role, DNA ligase that seals nicks in double-stranded DNA during DNA replication, DNA recombination and DNA repair. This chain is DNA ligase, found in Methanococcus vannielii (strain ATCC 35089 / DSM 1224 / JCM 13029 / OCM 148 / SB).